Here is a 188-residue protein sequence, read N- to C-terminus: Ribosome-recycling factor (188 aa).

Belongs to the RRF family.

Its subcellular location is the cytoplasm. Its function is as follows. Responsible for the release of ribosomes from messenger RNA at the termination of protein biosynthesis. May increase the efficiency of translation by recycling ribosomes from one round of translation to another. This Phenylobacterium zucineum (strain HLK1) protein is Ribosome-recycling factor.